The following is a 722-amino-acid chain: Dynein axonemal intermediate chain 7 (722 aa).

Residues 1-15 (MGPKAKKSGSKKKKV) are compositionally biased toward basic residues. The tract at residues 1 to 20 (MGPKAKKSGSKKKKVTKAER) is disordered.

This sequence belongs to the DNAI7 family. Part of the multisubunit axonemal dynein complex formed at least of two heavy chains and a number of intermediate and light chains. Associates with tubulin. Interacts with microtubule. Post-translationally, ubiquitinated. Ubiquitination leads to its degradation through the 26S proteasome. Ubiquitin-proteasome-mediated DNAI7 degradation occurs in mitosis.

It is found in the cell projection. It localises to the cilium. The protein localises to the cytoplasm. Via its association with the multisubunit axonemal dynein complex, is potentially involved in the regulation of cilia function. May act as a cell cycle regulator. This is Dynein axonemal intermediate chain 7 from Macaca fascicularis (Crab-eating macaque).